The primary structure comprises 22 residues: 50 kDa cell wall protein (22 aa).

It is found in the secreted. The protein resides in the cell wall. This is 50 kDa cell wall protein from Nicotiana tabacum (Common tobacco).